Reading from the N-terminus, the 218-residue chain is Small ribosomal subunit protein uS3 (218 aa).

Residues 38–106 form the KH type-2 domain; that stretch reads IREYINKRLQ…REHINIVEIK (69 aa).

This sequence belongs to the universal ribosomal protein uS3 family. Part of the 30S ribosomal subunit. Forms a tight complex with proteins S10 and S14.

Functionally, binds the lower part of the 30S subunit head. Binds mRNA in the 70S ribosome, positioning it for translation. This Geobacillus stearothermophilus (Bacillus stearothermophilus) protein is Small ribosomal subunit protein uS3.